We begin with the raw amino-acid sequence, 403 residues long: Phosphoglycerate kinase (403 aa).

Residues 24–26 (DLN), Arg-39, 62–65 (HLGR), Arg-121, and Arg-161 each bind substrate. ATP-binding positions include Lys-211, Gly-299, Glu-330, and 359–362 (GGDS).

Belongs to the phosphoglycerate kinase family. As to quaternary structure, monomer.

It localises to the cytoplasm. It carries out the reaction (2R)-3-phosphoglycerate + ATP = (2R)-3-phospho-glyceroyl phosphate + ADP. It functions in the pathway carbohydrate degradation; glycolysis; pyruvate from D-glyceraldehyde 3-phosphate: step 2/5. The polypeptide is Phosphoglycerate kinase (Corynebacterium kroppenstedtii (strain DSM 44385 / JCM 11950 / CIP 105744 / CCUG 35717)).